A 106-amino-acid chain; its full sequence is Large ribosomal subunit protein P1 (106 aa).

The interval 69–106 (AAAAAPAEEAKEEAKEEEEEEEEVKEEEAIEGLGALFG) is disordered. Positions 83-98 (KEEEEEEEEVKEEEAI) are enriched in acidic residues.

This sequence belongs to the eukaryotic ribosomal protein P1/P2 family. As to quaternary structure, part of the 50S ribosomal subunit. Homodimer, it forms part of the ribosomal stalk which helps the ribosome interact with GTP-bound translation factors. Forms a heptameric uL10/P0(P1)2(P1)2(P1)2 complex, where uL10/P0 forms an elongated spine to which the P1 dimers bind in a sequential fashion.

Functionally, forms part of the ribosomal stalk, playing a central role in the interaction of the ribosome with GTP-bound translation factors. The protein is Large ribosomal subunit protein P1 of Archaeoglobus fulgidus (strain ATCC 49558 / DSM 4304 / JCM 9628 / NBRC 100126 / VC-16).